A 247-amino-acid chain; its full sequence is DNA polymerase sliding clamp (247 aa).

The protein belongs to the PCNA family. As to quaternary structure, homotrimer. The subunits circularize to form a toroid; DNA passes through its center. Replication factor C (RFC) is required to load the toroid on the DNA.

In terms of biological role, sliding clamp subunit that acts as a moving platform for DNA processing. Responsible for tethering the catalytic subunit of DNA polymerase and other proteins to DNA during high-speed replication. The sequence is that of DNA polymerase sliding clamp from Natronomonas pharaonis (strain ATCC 35678 / DSM 2160 / CIP 103997 / JCM 8858 / NBRC 14720 / NCIMB 2260 / Gabara) (Halobacterium pharaonis).